Reading from the N-terminus, the 275-residue chain is Large ribosomal subunit protein uL2 (275 aa).

Disordered stretches follow at residues 24–47 (IHKG…NHHG) and 227–261 (PVDH…KTRK).

This sequence belongs to the universal ribosomal protein uL2 family. In terms of assembly, part of the 50S ribosomal subunit. Forms a bridge to the 30S subunit in the 70S ribosome.

In terms of biological role, one of the primary rRNA binding proteins. Required for association of the 30S and 50S subunits to form the 70S ribosome, for tRNA binding and peptide bond formation. It has been suggested to have peptidyltransferase activity; this is somewhat controversial. Makes several contacts with the 16S rRNA in the 70S ribosome. The polypeptide is Large ribosomal subunit protein uL2 (Xylella fastidiosa (strain M12)).